The primary structure comprises 146 residues: UPF0178 protein Helmi_09130 (146 aa).

The protein belongs to the UPF0178 family.

The chain is UPF0178 protein Helmi_09130 from Heliobacterium modesticaldum (strain ATCC 51547 / Ice1).